Here is a 483-residue protein sequence, read N- to C-terminus: Auxin transporter-like protein 2 (483 aa).

Over 1–53 (MENGEKAAETVVVGNYVEMEKDGKALDIKSKLSDMFWHGGSAYDAWFSCASNQ) the chain is Cytoplasmic. A helical membrane pass occupies residues 54–71 (VAQVLLTLPYSFSQLGML). At 72–73 (SG) the chain is on the extracellular side. The chain crosses the membrane as a helical span at residues 74 to 94 (ILFQLFYGILGSWTAYLISIL). The Cytoplasmic segment spans residues 95–130 (YVEYRTRKEREKVNFRNHVIQWFEVLDGLLGKHWRN). A helical membrane pass occupies residues 131-151 (VGLAFNCTFLLFGSVIQLIAC). Residues 152–166 (ASNIYYINDNLDKRT) are Extracellular-facing. The helical transmembrane segment at 167–187 (WTYIFGACCATTVFIPSFHNY) threads the bilayer. At 188–190 (RIW) the chain is on the cytoplasmic side. A helical membrane pass occupies residues 191 to 211 (SFLGLLMTTYTAWYLTIASIL). At 212 to 226 (HGQVEGVKHSGPSKL) the chain is on the extracellular side. Residues 227–247 (VLYFTGATNILYTFGGHAVTV) form a helical membrane-spanning segment. Over 248-261 (EIMHAMWKPQKFKS) the chain is Cytoplasmic. A helical membrane pass occupies residues 262–282 (IYLFATLYVLTLTLPSASAVY). The Extracellular portion of the chain corresponds to 283–306 (WAFGDLLLNHSNAFALLPKNLYRD). Asn291 carries an N-linked (GlcNAc...) asparagine glycan. A helical transmembrane segment spans residues 307–327 (FAVVLMLIHQFITFGFACTPL). Residues 328-350 (YFVWEKLIGMHECRSMCKRAAAR) lie on the Cytoplasmic side of the membrane. Residues 351 to 371 (LPVVIPIWFLAIIFPFFGPIN) traverse the membrane as a helical segment. Topologically, residues 372–374 (STV) are extracellular. The chain crosses the membrane as a helical span at residues 375–395 (GSLLVSFTVYIIPALAHIFTF). Topologically, residues 396 to 422 (RSSAARENAVEQPPRFLGRWTGAFTIN) are cytoplasmic. A helical membrane pass occupies residues 423–443 (AFIVVWVFIVGFGFGGWASMI). Residues 444–483 (NFVHQIDTFGLFTKCYQCPPPVMVSPPPISHPHFNHTHGL) lie on the Extracellular side of the membrane. An N-linked (GlcNAc...) asparagine glycan is attached at Asn478.

It belongs to the amino acid/polyamine transporter 2 family. Amino acid/auxin permease (AAAP) (TC 2.A.18.1) subfamily.

Its subcellular location is the cell membrane. Carrier protein involved in proton-driven auxin influx. Mediates the formation of auxin gradient from developing leaves (site of auxin biosynthesis) to tips by contributing to the loading of auxin in vascular tissues and facilitating acropetal (base to tip) auxin transport within inner tissues of the root apex, and basipetal (tip to base) auxin transport within outer tissues of the root apex. In Arabidopsis thaliana (Mouse-ear cress), this protein is Auxin transporter-like protein 2 (LAX2).